The primary structure comprises 519 residues: 2-isopropylmalate synthase (519 aa).

The Pyruvate carboxyltransferase domain maps to 5–267; it reads VKIFDTTLRD…NTNIRSHEIS (263 aa). Mn(2+) contacts are provided by aspartate 14, histidine 202, histidine 204, and asparagine 238. Residues 392–519 are regulatory domain; sequence KLLYLQASSG…KKQQTQTAGV (128 aa).

It belongs to the alpha-IPM synthase/homocitrate synthase family. LeuA type 1 subfamily. As to quaternary structure, homodimer. Mn(2+) is required as a cofactor.

Its subcellular location is the cytoplasm. It carries out the reaction 3-methyl-2-oxobutanoate + acetyl-CoA + H2O = (2S)-2-isopropylmalate + CoA + H(+). It participates in amino-acid biosynthesis; L-leucine biosynthesis; L-leucine from 3-methyl-2-oxobutanoate: step 1/4. In terms of biological role, catalyzes the condensation of the acetyl group of acetyl-CoA with 3-methyl-2-oxobutanoate (2-ketoisovalerate) to form 3-carboxy-3-hydroxy-4-methylpentanoate (2-isopropylmalate). This is 2-isopropylmalate synthase from Pseudoalteromonas atlantica (strain T6c / ATCC BAA-1087).